The sequence spans 390 residues: S-adenosylmethionine synthase 3 (390 aa).

Residue E9 participates in Mg(2+) binding. An ATP-binding site is contributed by H15. E43 contacts K(+). L-methionine is bound by residues E56 and Q99. ATP is bound by residues 167 to 169 (DGK), 235 to 238 (SGRF), D246, 252 to 253 (RK), A269, K273, and K277. Position 246 (D246) interacts with L-methionine. K277 contributes to the L-methionine binding site.

This sequence belongs to the AdoMet synthase family. Homotetramer. Interacts with GRF3. Mn(2+) serves as cofactor. It depends on Mg(2+) as a cofactor. Co(2+) is required as a cofactor. Requires K(+) as cofactor.

It localises to the cytoplasm. It carries out the reaction L-methionine + ATP + H2O = S-adenosyl-L-methionine + phosphate + diphosphate. It participates in amino-acid biosynthesis; S-adenosyl-L-methionine biosynthesis; S-adenosyl-L-methionine from L-methionine: step 1/1. With respect to regulation, inhibited by 5,5'-dithiobis-2-nitrobenzoic acid (DTNB) and N-ethylmaleimide (NEM) (in vitro). In terms of biological role, catalyzes the formation of S-adenosylmethionine from methionine and ATP. The reaction comprises two steps that are both catalyzed by the same enzyme: formation of S-adenosylmethionine (AdoMet) and triphosphate, and subsequent hydrolysis of the triphosphate. Involved in the biosynthesis of lignin. The sequence is that of S-adenosylmethionine synthase 3 (METK3) from Arabidopsis thaliana (Mouse-ear cress).